Consider the following 464-residue polypeptide: 3-isopropylmalate dehydratase large subunit (464 aa).

Residues C337, C397, and C400 each coordinate [4Fe-4S] cluster.

Belongs to the aconitase/IPM isomerase family. LeuC type 1 subfamily. As to quaternary structure, heterodimer of LeuC and LeuD. It depends on [4Fe-4S] cluster as a cofactor.

The catalysed reaction is (2R,3S)-3-isopropylmalate = (2S)-2-isopropylmalate. It functions in the pathway amino-acid biosynthesis; L-leucine biosynthesis; L-leucine from 3-methyl-2-oxobutanoate: step 2/4. In terms of biological role, catalyzes the isomerization between 2-isopropylmalate and 3-isopropylmalate, via the formation of 2-isopropylmaleate. The protein is 3-isopropylmalate dehydratase large subunit of Bacillus cereus (strain B4264).